Consider the following 519-residue polypeptide: Cytochrome P450 52E2 (519 aa).

Transmembrane regions (helical) follow at residues 10–30 (MLGG…FYFI) and 44–64 (PIFF…NAWF). Residue Cys461 participates in heme binding.

It belongs to the cytochrome P450 family. Heme is required as a cofactor.

The protein localises to the membrane. Its function is as follows. Together with an NADPH cytochrome P450 the enzyme system catalyzes the terminal hydroxylation as the first step in the assimilation of alkanes and fatty acids. The sequence is that of Cytochrome P450 52E2 (CYP52E2) from Candida apicola (Yeast).